A 119-amino-acid chain; its full sequence is uncharacterized protein (119 aa).

This is an uncharacterized protein from Bacillus subtilis (strain 168).